We begin with the raw amino-acid sequence, 264 residues long: 2-C-methyl-D-erythritol 4-phosphate cytidylyltransferase (264 aa).

The tract at residues 234–264 is disordered; sequence ARDPESAHPQSSVLASAFSGPGSRVSGPEEI.

This sequence belongs to the IspD/TarI cytidylyltransferase family. IspD subfamily.

The enzyme catalyses 2-C-methyl-D-erythritol 4-phosphate + CTP + H(+) = 4-CDP-2-C-methyl-D-erythritol + diphosphate. The protein operates within isoprenoid biosynthesis; isopentenyl diphosphate biosynthesis via DXP pathway; isopentenyl diphosphate from 1-deoxy-D-xylulose 5-phosphate: step 2/6. Functionally, catalyzes the formation of 4-diphosphocytidyl-2-C-methyl-D-erythritol from CTP and 2-C-methyl-D-erythritol 4-phosphate (MEP). This chain is 2-C-methyl-D-erythritol 4-phosphate cytidylyltransferase, found in Xanthomonas euvesicatoria pv. vesicatoria (strain 85-10) (Xanthomonas campestris pv. vesicatoria).